We begin with the raw amino-acid sequence, 321 residues long: tRNA-dihydrouridine synthase B (321 aa).

FMN contacts are provided by residues 16 to 18 (PMA) and Gln70. Cys100 functions as the Proton donor in the catalytic mechanism. FMN-binding positions include Lys139, 200 to 202 (NGD), and 224 to 225 (GR).

It belongs to the Dus family. DusB subfamily. FMN is required as a cofactor.

The catalysed reaction is a 5,6-dihydrouridine in tRNA + NAD(+) = a uridine in tRNA + NADH + H(+). It catalyses the reaction a 5,6-dihydrouridine in tRNA + NADP(+) = a uridine in tRNA + NADPH + H(+). Catalyzes the synthesis of 5,6-dihydrouridine (D), a modified base found in the D-loop of most tRNAs, via the reduction of the C5-C6 double bond in target uridines. This is tRNA-dihydrouridine synthase B from Yersinia pestis.